A 242-amino-acid polypeptide reads, in one-letter code: Small ribosomal subunit protein uS2 (242 aa).

This sequence belongs to the universal ribosomal protein uS2 family.

The chain is Small ribosomal subunit protein uS2 from Shewanella sediminis (strain HAW-EB3).